The chain runs to 377 residues: tRNA-specific 2-thiouridylase MnmA (377 aa).

ATP is bound by residues 8-15 (GMSGGVDS) and methionine 34. The segment at 94–96 (NPD) is interaction with target base in tRNA. Cysteine 99 functions as the Nucleophile in the catalytic mechanism. A disulfide bridge links cysteine 99 with cysteine 201. Glycine 123 is a binding site for ATP. An interaction with tRNA region spans residues 151-153 (KDQ). The active-site Cysteine persulfide intermediate is cysteine 201. An interaction with tRNA region spans residues 315–316 (RY).

The protein belongs to the MnmA/TRMU family.

It is found in the cytoplasm. It carries out the reaction S-sulfanyl-L-cysteinyl-[protein] + uridine(34) in tRNA + AH2 + ATP = 2-thiouridine(34) in tRNA + L-cysteinyl-[protein] + A + AMP + diphosphate + H(+). Functionally, catalyzes the 2-thiolation of uridine at the wobble position (U34) of tRNA, leading to the formation of s(2)U34. The protein is tRNA-specific 2-thiouridylase MnmA of Acinetobacter baumannii (strain AB307-0294).